We begin with the raw amino-acid sequence, 431 residues long: Adenylosuccinate synthetase (431 aa).

Residues 13-19 (GDEGKGK) and 41-43 (GHT) contribute to the GTP site. Asp-14 functions as the Proton acceptor in the catalytic mechanism. The Mg(2+) site is built by Asp-14 and Gly-41. IMP-binding positions include 14–17 (DEGK), 39–42 (NAGH), Thr-130, Arg-144, Gln-225, Thr-240, and Arg-304. Residue His-42 is the Proton donor of the active site. Substrate is bound at residue 300–306 (ATTGRKR). Residues Arg-306, 332–334 (KLD), and 415–417 (STG) each bind GTP.

It belongs to the adenylosuccinate synthetase family. Homodimer. The cofactor is Mg(2+).

The protein resides in the cytoplasm. The catalysed reaction is IMP + L-aspartate + GTP = N(6)-(1,2-dicarboxyethyl)-AMP + GDP + phosphate + 2 H(+). Its pathway is purine metabolism; AMP biosynthesis via de novo pathway; AMP from IMP: step 1/2. Functionally, plays an important role in the de novo pathway of purine nucleotide biosynthesis. Catalyzes the first committed step in the biosynthesis of AMP from IMP. The sequence is that of Adenylosuccinate synthetase from Shewanella loihica (strain ATCC BAA-1088 / PV-4).